We begin with the raw amino-acid sequence, 286 residues long: MISSKTSFIALIGNPVSHSLSPIMQNAALQYLGLDLIYIAMPCKDEDLELVMNSLKKINCKGLNITIPHKEKVFDLCSEISPIANKLKAINTLKLNSAKEWSATNTDVEGFIYPLKTLNLTKKQSIVLGSGGAARSVIQGLINLNFSTISVVSRNKSSLDELIKNFENQITIEGLLNNDNRTETLIEEADLIVNTTPVGMKTTKHEMNVLPYGDVFWRSLNSKTIVYDLIYNPAPTPLLKFSAKKGCITIDGLKMLVAQGAKSLSFWTNGLEVPFHIMNDALKNYL.

Shikimate contacts are provided by residues Ser19–Ser21 and Thr66. Lys70 functions as the Proton acceptor in the catalytic mechanism. Shikimate contacts are provided by Asn91 and Asp107. NADP(+)-binding positions include Gly129–Ala133 and Leu229. Residue Tyr231 participates in shikimate binding. NADP(+) is bound at residue Gly252.

Belongs to the shikimate dehydrogenase family. Homodimer.

It catalyses the reaction shikimate + NADP(+) = 3-dehydroshikimate + NADPH + H(+). It participates in metabolic intermediate biosynthesis; chorismate biosynthesis; chorismate from D-erythrose 4-phosphate and phosphoenolpyruvate: step 4/7. Involved in the biosynthesis of the chorismate, which leads to the biosynthesis of aromatic amino acids. Catalyzes the reversible NADPH linked reduction of 3-dehydroshikimate (DHSA) to yield shikimate (SA). The chain is Shikimate dehydrogenase (NADP(+)) from Prochlorococcus marinus (strain MIT 9312).